The primary structure comprises 403 residues: Queuine tRNA-ribosyltransferase catalytic subunit 1 (403 aa).

Ala-2 is subject to N-acetylalanine. Asp-105 functions as the Proton acceptor in the catalytic mechanism. 105 to 109 (DSGGF) is a binding site for queuine. Ser-139 is subject to Phosphoserine. The queuine site is built by Asp-159, Gln-202, and Gly-229. Residues 260–266 (GVGYATD) form an RNA binding region. Asp-279 functions as the Nucleophile in the catalytic mechanism. The RNA binding; important for wobble base 34 recognition stretch occupies residues 284 to 288 (TRTAR). Residues Cys-317, Cys-319, Cys-322, and His-348 each contribute to the Zn(2+) site.

It belongs to the queuine tRNA-ribosyltransferase family. As to quaternary structure, heterodimer of a catalytic subunit QTRT1 and an accessory subunit QTRT2. Zn(2+) serves as cofactor. As to expression, expressed in brain, heart, kidney, liver, ling, skeletal muscle, spleen and testis.

The protein resides in the cytoplasm. The protein localises to the mitochondrion outer membrane. Its subcellular location is the nucleus. It catalyses the reaction guanosine(34) in tRNA + queuine = queuosine(34) in tRNA + guanine. In terms of biological role, catalytic subunit of the queuine tRNA-ribosyltransferase (TGT) that catalyzes the base-exchange of a guanine (G) residue with queuine (Q) at position 34 (anticodon wobble position) in tRNAs with GU(N) anticodons (tRNA-Asp, -Asn, -His and -Tyr), resulting in the hypermodified nucleoside queuosine (7-(((4,5-cis-dihydroxy-2-cyclopenten-1-yl)amino)methyl)-7-deazaguanosine). Catalysis occurs through a double-displacement mechanism. The nucleophile active site attacks the C1' of nucleotide 34 to detach the guanine base from the RNA, forming a covalent enzyme-RNA intermediate. The proton acceptor active site deprotonates the incoming queuine, allowing a nucleophilic attack on the C1' of the ribose to form the product. Modification of cytoplasmic tRNAs with queuosine controls the elongation speed of cognate codons, thereby ensuring the correct folding of nascent proteins to maintain proteome integrity. This chain is Queuine tRNA-ribosyltransferase catalytic subunit 1, found in Mus musculus (Mouse).